We begin with the raw amino-acid sequence, 669 residues long: DNA ligase (669 aa).

Residues 34–38, 83–84, and Glu-114 contribute to the NAD(+) site; these read DAEYD and SL. The active-site N6-AMP-lysine intermediate is Lys-116. NAD(+) contacts are provided by Arg-137, Glu-171, Lys-287, and Lys-311. Zn(2+) contacts are provided by Cys-405, Cys-408, Cys-423, and Cys-428. The BRCT domain maps to 591–669; it reads NVESYFAGKT…EERFLQELNK (79 aa).

The protein belongs to the NAD-dependent DNA ligase family. LigA subfamily. The cofactor is Mg(2+). Mn(2+) serves as cofactor.

The enzyme catalyses NAD(+) + (deoxyribonucleotide)n-3'-hydroxyl + 5'-phospho-(deoxyribonucleotide)m = (deoxyribonucleotide)n+m + AMP + beta-nicotinamide D-nucleotide.. Its function is as follows. DNA ligase that catalyzes the formation of phosphodiester linkages between 5'-phosphoryl and 3'-hydroxyl groups in double-stranded DNA using NAD as a coenzyme and as the energy source for the reaction. It is essential for DNA replication and repair of damaged DNA. The protein is DNA ligase of Bacillus cereus (strain AH820).